Reading from the N-terminus, the 249-residue chain is Exosome complex component Rrp41 (249 aa).

It belongs to the RNase PH family. Rrp41 subfamily. As to quaternary structure, component of the archaeal exosome complex. Forms a hexameric ring-like arrangement composed of 3 Rrp41-Rrp42 heterodimers. The hexameric ring associates with a trimer of Rrp4 and/or Csl4 subunits.

The protein localises to the cytoplasm. Its function is as follows. Catalytic component of the exosome, which is a complex involved in RNA degradation. Has 3'-&gt;5' exoribonuclease activity. Can also synthesize heteromeric RNA-tails. The chain is Exosome complex component Rrp41 from Thermococcus onnurineus (strain NA1).